A 338-amino-acid chain; its full sequence is Nicotinate-nucleotide--dimethylbenzimidazole phosphoribosyltransferase (338 aa).

The active-site Proton acceptor is Glu-306.

It belongs to the CobT family.

It catalyses the reaction 5,6-dimethylbenzimidazole + nicotinate beta-D-ribonucleotide = alpha-ribazole 5'-phosphate + nicotinate + H(+). Its pathway is nucleoside biosynthesis; alpha-ribazole biosynthesis; alpha-ribazole from 5,6-dimethylbenzimidazole: step 1/2. Its function is as follows. Catalyzes the synthesis of alpha-ribazole-5'-phosphate from nicotinate mononucleotide (NAMN) and 5,6-dimethylbenzimidazole (DMB). This is Nicotinate-nucleotide--dimethylbenzimidazole phosphoribosyltransferase from Cereibacter sphaeroides (strain ATCC 17025 / ATH 2.4.3) (Rhodobacter sphaeroides).